Reading from the N-terminus, the 168-residue chain is Probable deoxyuridine 5'-triphosphate nucleotidohydrolase (168 aa).

The protein belongs to the dCTP deaminase family. Archaeal dUTPase subfamily.

It catalyses the reaction dUTP + H2O = dUMP + diphosphate + H(+). Its pathway is pyrimidine metabolism; dUMP biosynthesis; dUMP from dCTP (dUTP route): step 2/2. This enzyme is involved in nucleotide metabolism: it produces dUMP, the immediate precursor of thymidine nucleotides and it decreases the intracellular concentration of dUTP so that uracil cannot be incorporated into DNA. This Archaeoglobus fulgidus (strain ATCC 49558 / DSM 4304 / JCM 9628 / NBRC 100126 / VC-16) protein is Probable deoxyuridine 5'-triphosphate nucleotidohydrolase.